Reading from the N-terminus, the 391-residue chain is Elongation factor Tu 1 (391 aa).

A tr-type G domain is found at 10–201 (KPHVNIGTIG…EVDNYIPTPE (192 aa)). The segment at 19–26 (GHVDHGKT) is G1. 19–26 (GHVDHGKT) serves as a coordination point for GTP. Threonine 26 contributes to the Mg(2+) binding site. The segment at 55 to 59 (GITIS) is G2. A G3 region spans residues 76-79 (DCPG). Residues 76-80 (DCPGH) and 131-134 (NKVD) contribute to the GTP site. The segment at 131-134 (NKVD) is G4. The G5 stretch occupies residues 169–171 (SAL).

This sequence belongs to the TRAFAC class translation factor GTPase superfamily. Classic translation factor GTPase family. EF-Tu/EF-1A subfamily. As to quaternary structure, monomer.

The protein localises to the cytoplasm. The enzyme catalyses GTP + H2O = GDP + phosphate + H(+). Its function is as follows. GTP hydrolase that promotes the GTP-dependent binding of aminoacyl-tRNA to the A-site of ribosomes during protein biosynthesis. This chain is Elongation factor Tu 1, found in Bartonella quintana (strain Toulouse) (Rochalimaea quintana).